The primary structure comprises 178 residues: Crossover junction endodeoxyribonuclease RuvC (178 aa).

Catalysis depends on residues aspartate 7, glutamate 67, and aspartate 139. Mg(2+) is bound by residues aspartate 7, glutamate 67, and aspartate 139.

Belongs to the RuvC family. As to quaternary structure, homodimer which binds Holliday junction (HJ) DNA. The HJ becomes 2-fold symmetrical on binding to RuvC with unstacked arms; it has a different conformation from HJ DNA in complex with RuvA. In the full resolvosome a probable DNA-RuvA(4)-RuvB(12)-RuvC(2) complex forms which resolves the HJ. Requires Mg(2+) as cofactor.

The protein resides in the cytoplasm. The enzyme catalyses Endonucleolytic cleavage at a junction such as a reciprocal single-stranded crossover between two homologous DNA duplexes (Holliday junction).. The RuvA-RuvB-RuvC complex processes Holliday junction (HJ) DNA during genetic recombination and DNA repair. Endonuclease that resolves HJ intermediates. Cleaves cruciform DNA by making single-stranded nicks across the HJ at symmetrical positions within the homologous arms, yielding a 5'-phosphate and a 3'-hydroxyl group; requires a central core of homology in the junction. The consensus cleavage sequence is 5'-(A/T)TT(C/G)-3'. Cleavage occurs on the 3'-side of the TT dinucleotide at the point of strand exchange. HJ branch migration catalyzed by RuvA-RuvB allows RuvC to scan DNA until it finds its consensus sequence, where it cleaves and resolves the cruciform DNA. This is Crossover junction endodeoxyribonuclease RuvC from Trichlorobacter lovleyi (strain ATCC BAA-1151 / DSM 17278 / SZ) (Geobacter lovleyi).